The primary structure comprises 62 residues: Conotoxin Qc5.1 (62 aa).

The first 22 residues, 1–22 (MRCVPVFIILLLLSPSAPSVDA), serve as a signal peptide directing secretion. The propeptide occupies 23–48 (HPMTKDDVPQASFHDDAKRTLQVPWM). A Valine amide modification is found at Val-60.

It belongs to the conotoxin T superfamily. In terms of processing, contains 2 disulfide bonds that can be either 'C1-C3, C2-C4' or 'C1-C4, C2-C3', since these disulfide connectivities have been observed for conotoxins with cysteine framework V (for examples, see AC P0DQQ7 and AC P81755). As to expression, expressed by the venom duct.

The protein localises to the secreted. In Conus quercinus (Oak cone), this protein is Conotoxin Qc5.1.